Reading from the N-terminus, the 164-residue chain is Terminase, small subunit (164 aa).

Residues 1–35 form a helix-turn-helix (HTH) region; sequence MEGLDINKLLDISDLPGIDGEEIKVYEPLQLVEVK. Positions 1–35 are interaction with gp17; the sequence is MEGLDINKLLDISDLPGIDGEEIKVYEPLQLVEVK. The oligomerization stretch occupies residues 36–114; that stretch reads SNPQNRTPDL…KDMKDITSEQ (79 aa). The interval 115–164 is interaction with gp17; sequence VGTKGAVPTGQMNIQNATVFMGSPTELMDEIGDAYEAQEAREKVINGTTD.

As to quaternary structure, homooctamer. Interacts with the terminase large subunit gp17; the active complex is probably heterooligomeric.

The terminase small subunit binds to the packaging initiation site and regulates the ATPase activity of the terminase large subunit. The terminase lies at a unique vertex of the procapsid and is composed of two subunits, a small terminase subunit involved in viral DNA recognition (packaging 'pac' sequence), and a large terminase subunit possessing endonucleolytic and ATPase activities. Both terminase subunits heterooligomerize and are docked on the portal protein to form the packaging machine. The terminase large subunit exhibits endonuclease activity and cleaves the viral genome concatemer once the capsid is full (headful packaging). Once the capsid is packaged with the DNA, the terminase complex is substituted by neck proteins. The protein is Terminase, small subunit (16) of Enterobacteria phage T4 (Bacteriophage T4).